Reading from the N-terminus, the 216-residue chain is ATP phosphoribosyltransferase (216 aa).

The protein belongs to the ATP phosphoribosyltransferase family. Short subfamily. In terms of assembly, heteromultimer composed of HisG and HisZ subunits.

It is found in the cytoplasm. The enzyme catalyses 1-(5-phospho-beta-D-ribosyl)-ATP + diphosphate = 5-phospho-alpha-D-ribose 1-diphosphate + ATP. Its pathway is amino-acid biosynthesis; L-histidine biosynthesis; L-histidine from 5-phospho-alpha-D-ribose 1-diphosphate: step 1/9. Its function is as follows. Catalyzes the condensation of ATP and 5-phosphoribose 1-diphosphate to form N'-(5'-phosphoribosyl)-ATP (PR-ATP). Has a crucial role in the pathway because the rate of histidine biosynthesis seems to be controlled primarily by regulation of HisG enzymatic activity. In Prochlorococcus marinus (strain MIT 9211), this protein is ATP phosphoribosyltransferase.